Here is a 266-residue protein sequence, read N- to C-terminus: Interleukin-1 beta (266 aa).

Residues 1 to 114 (MAAVPELSSE…DTWDEEYESD (114 aa)) constitute a propeptide that is removed on maturation.

It belongs to the IL-1 family. As to quaternary structure, monomer. In its precursor form, weakly interacts with full-length MEFV; the mature cytokine does not interact at all. Interacts with integrins ITGAV:ITGBV and ITGA5:ITGB1; integrin-binding is required for IL1B signaling. Interacts with cargo receptor TMED10; the interaction is direct and is required for the secretion of IL1B mature form. Interacts with HSP90AB1; the interaction facilitates cargo translocation into the ERGIC. Interacts with HSP90B1; the interaction facilitates cargo translocation into the ERGIC.

Its subcellular location is the cytoplasm. The protein resides in the cytosol. It is found in the secreted. The protein localises to the lysosome. It localises to the extracellular exosome. Potent pro-inflammatory cytokine. Initially discovered as the major endogenous pyrogen, induces prostaglandin synthesis, neutrophil influx and activation, T-cell activation and cytokine production, B-cell activation and antibody production, and fibroblast proliferation and collagen production. Promotes Th17 differentiation of T-cells. Synergizes with IL12/interleukin-12 to induce IFNG synthesis from T-helper 1 (Th1) cells. Plays a role in angiogenesis by inducing VEGF production synergistically with TNF and IL6. Involved in transduction of inflammation downstream of pyroptosis: its mature form is specifically released in the extracellular milieu by passing through the gasdermin-D (GSDMD) pore. In Cavia porcellus (Guinea pig), this protein is Interleukin-1 beta (IL1B).